Reading from the N-terminus, the 332-residue chain is Succinylglutamate desuccinylase (332 aa).

The Zn(2+) site is built by His-59, Glu-62, and His-151. Glu-215 is an active-site residue.

The protein belongs to the AspA/AstE family. Succinylglutamate desuccinylase subfamily. The cofactor is Zn(2+).

It carries out the reaction N-succinyl-L-glutamate + H2O = L-glutamate + succinate. Its pathway is amino-acid degradation; L-arginine degradation via AST pathway; L-glutamate and succinate from L-arginine: step 5/5. Its function is as follows. Transforms N(2)-succinylglutamate into succinate and glutamate. The polypeptide is Succinylglutamate desuccinylase (Pseudomonas aeruginosa (strain LESB58)).